The following is a 320-amino-acid chain: tRNA U34 carboxymethyltransferase (320 aa).

Carboxy-S-adenosyl-L-methionine is bound by residues Lys87, Trp101, Lys106, Gly126, 148–150 (EPS), 176–177 (VE), Met192, Tyr196, and Arg311.

It belongs to the class I-like SAM-binding methyltransferase superfamily. CmoB family. In terms of assembly, homotetramer.

The catalysed reaction is carboxy-S-adenosyl-L-methionine + 5-hydroxyuridine(34) in tRNA = 5-carboxymethoxyuridine(34) in tRNA + S-adenosyl-L-homocysteine + H(+). Catalyzes carboxymethyl transfer from carboxy-S-adenosyl-L-methionine (Cx-SAM) to 5-hydroxyuridine (ho5U) to form 5-carboxymethoxyuridine (cmo5U) at position 34 in tRNAs. The chain is tRNA U34 carboxymethyltransferase from Desulfotalea psychrophila (strain LSv54 / DSM 12343).